We begin with the raw amino-acid sequence, 143 residues long: Transcriptional regulator MraZ (143 aa).

SpoVT-AbrB domains are found at residues threonine 5–glutamate 47 and alanine 76–alanine 119.

This sequence belongs to the MraZ family. In terms of assembly, forms oligomers.

The protein localises to the cytoplasm. It localises to the nucleoid. The protein is Transcriptional regulator MraZ of Leifsonia xyli subsp. xyli (strain CTCB07).